Consider the following 364-residue polypeptide: 3-isopropylmalate dehydrogenase (364 aa).

Position 76-89 (76-89 (GPKWDGNAPEKRPE)) interacts with NAD(+). Positions 96, 106, 134, and 223 each coordinate substrate. Residues Asp223, Asp247, and Asp251 each coordinate Mg(2+). NAD(+) is bound at residue 281 to 293 (GSAPDIAGTGAAN).

The protein belongs to the isocitrate and isopropylmalate dehydrogenases family. LeuB type 1 subfamily. In terms of assembly, homodimer. Mg(2+) serves as cofactor. The cofactor is Mn(2+).

It is found in the cytoplasm. The catalysed reaction is (2R,3S)-3-isopropylmalate + NAD(+) = 4-methyl-2-oxopentanoate + CO2 + NADH. It functions in the pathway amino-acid biosynthesis; L-leucine biosynthesis; L-leucine from 3-methyl-2-oxobutanoate: step 3/4. Its function is as follows. Catalyzes the oxidation of 3-carboxy-2-hydroxy-4-methylpentanoate (3-isopropylmalate) to 3-carboxy-4-methyl-2-oxopentanoate. The product decarboxylates to 4-methyl-2 oxopentanoate. The sequence is that of 3-isopropylmalate dehydrogenase from Shouchella clausii (strain KSM-K16) (Alkalihalobacillus clausii).